Consider the following 393-residue polypeptide: Actin-related protein 2 (393 aa).

ATP is bound by residues 158–160, 212–216, and 303–308; these read GDG, RQMKE, and GGTTMY.

Belongs to the actin family. ARP2 subfamily. Component of the Arp2/3 complex.

Its subcellular location is the cytoplasm. It localises to the cytoskeleton. Its function is as follows. Functions as ATP-binding component of the Arp2/3 complex which is involved in regulation of actin polymerization and together with an activating nucleation-promoting factor (NPF) mediates the formation of branched actin networks. Seems to contact the pointed end of the daughter actin filament. This chain is Actin-related protein 2 (arx-2), found in Caenorhabditis briggsae.